A 262-amino-acid chain; its full sequence is MSLPATAPAAAPVPKMEARHLSVRYGEKLAVKDISLALPERQVTALIGPSGCGKSTFLRALNRMNDLIPGARAEGEILLDGESVFDRHIDAVELRRRVGMVFQKSNPFPKSIFENVAYGLRVSGLKDRAALAERVERSLVNAALWDEVKDRLGESALGLSGGQQQRLCIARALAVEPEVVLMDEPASALDPIATAKIEDLIHHLKARYTIAIVTHNMQQAARVSDQTAFFYMGDLVEVGPTEQIFTNPSEQRTEDYVTGKFG.

Residues 16–257 (MEARHLSVRY…PSEQRTEDYV (242 aa)) form the ABC transporter domain. Residue 48–55 (GPSGCGKS) participates in ATP binding.

The protein belongs to the ABC transporter superfamily. Phosphate importer (TC 3.A.1.7) family. As to quaternary structure, the complex is composed of two ATP-binding proteins (PstB), two transmembrane proteins (PstC and PstA) and a solute-binding protein (PstS).

It localises to the cell inner membrane. It catalyses the reaction phosphate(out) + ATP + H2O = ADP + 2 phosphate(in) + H(+). In terms of biological role, part of the ABC transporter complex PstSACB involved in phosphate import. Responsible for energy coupling to the transport system. The chain is Phosphate import ATP-binding protein PstB from Anaeromyxobacter dehalogenans (strain 2CP-C).